The sequence spans 179 residues: NADH dehydrogenase [ubiquinone] 1 beta subcomplex subunit 9 (179 aa).

The residue at position 2 (Ala-2) is an N-acetylalanine. Ser-85 is modified (phosphoserine). The disordered stretch occupies residues 139 to 160 (QLQEETPVGGPRTEALPPARKQ).

The protein belongs to the complex I LYR family. As to quaternary structure, mammalian complex I is composed of 45 different subunits.

It localises to the mitochondrion inner membrane. Functionally, accessory subunit of the mitochondrial membrane respiratory chain NADH dehydrogenase (Complex I), that is believed to be not involved in catalysis. Complex I functions in the transfer of electrons from NADH to the respiratory chain. The immediate electron acceptor for the enzyme is believed to be ubiquinone. This chain is NADH dehydrogenase [ubiquinone] 1 beta subcomplex subunit 9 (NDUFB9), found in Bos taurus (Bovine).